We begin with the raw amino-acid sequence, 905 residues long: Probable aromatic-L-amino-acid decarboxylase (905 aa).

The segment at 250–296 (YLNPIIKTPPHNERVPKMKTNISKTRKKKGKVSDASKDSRPSETKKE) is disordered. Residues 280–296 (KVSDASKDSRPSETKKE) show a composition bias toward basic and acidic residues. Pyridoxal 5'-phosphate is bound by residues Thr-492 and Ser-591. Position 648 is an N6-(pyridoxal phosphate)lysine (Lys-648). Positions 861 to 905 (HTAEYADPPGKSNKSPQVAAKGELPSAAPPSSRTPNSDISEKSDR) are disordered. A compositionally biased stretch (polar residues) spans 889-898 (PPSSRTPNSD).

It belongs to the group II decarboxylase family. In terms of assembly, homodimer. Pyridoxal 5'-phosphate is required as a cofactor.

It carries out the reaction L-dopa + H(+) = dopamine + CO2. The catalysed reaction is 5-hydroxy-L-tryptophan + H(+) = serotonin + CO2. The protein operates within catecholamine biosynthesis; dopamine biosynthesis; dopamine from L-tyrosine: step 2/2. In terms of biological role, catalyzes the decarboxylation of L-3,4-dihydroxyphenylalanine (DOPA) to dopamine, L-5-hydroxytryptophan to serotonin and L-tryptophan to tryptamine. The sequence is that of Probable aromatic-L-amino-acid decarboxylase (hdl-1) from Caenorhabditis elegans.